The following is a 362-amino-acid chain: GDSL esterase/lipase At5g22810 (362 aa).

The N-terminal stretch at 1–28 (MGFSGIWLNLYVVFGSLMVFERMVVMVV) is a signal peptide. The active-site Nucleophile is the serine 44. Asparagine 159, asparagine 162, asparagine 264, and asparagine 329 each carry an N-linked (GlcNAc...) asparagine glycan. Active-site residues include aspartate 337 and histidine 340.

The protein belongs to the 'GDSL' lipolytic enzyme family.

Its subcellular location is the secreted. The polypeptide is GDSL esterase/lipase At5g22810 (Arabidopsis thaliana (Mouse-ear cress)).